A 112-amino-acid chain; its full sequence is ATP-dependent Clp protease adapter protein ClpS (112 aa).

It belongs to the ClpS family. In terms of assembly, binds to the N-terminal domain of the chaperone ClpA.

In terms of biological role, involved in the modulation of the specificity of the ClpAP-mediated ATP-dependent protein degradation. The sequence is that of ATP-dependent Clp protease adapter protein ClpS from Rhodococcus opacus (strain B4).